A 160-amino-acid polypeptide reads, in one-letter code: Nutritionally-regulated adipose and cardiac enriched protein homolog (160 aa).

Positions 1 to 69 (MRTAAGAVSP…AKPQRTSRRV (69 aa)) are disordered. 2 stretches are compositionally biased toward basic and acidic residues: residues 12–25 (SRPE…KNEE) and 33–42 (CRAEREDNRK). A helical membrane pass occupies residues 101 to 121 (GGSLLLQLCVCVLLVLALGLY).

The protein resides in the cell membrane. This is Nutritionally-regulated adipose and cardiac enriched protein homolog (NRAC) from Homo sapiens (Human).